The sequence spans 511 residues: Cytochrome P450 714C3 (511 aa).

Residues 1 to 6 lie on the Lumenal side of the membrane; that stretch reads MEKLLA. The chain crosses the membrane as a helical; Signal-anchor for type III membrane protein span at residues 7-27; sequence LIVVLVILLSLALFYLCNILW. The Cytoplasmic segment spans residues 28–511; it reads LRAVKIRKKL…GLPLMVTKLP (484 aa). Cys458 is a heme binding site.

The protein belongs to the cytochrome P450 family. Heme serves as cofactor.

The protein localises to the membrane. This chain is Cytochrome P450 714C3 (CYP714C3), found in Oryza sativa subsp. japonica (Rice).